The primary structure comprises 159 residues: Ribosomal RNA large subunit methyltransferase H (159 aa).

S-adenosyl-L-methionine-binding positions include isoleucine 75, glycine 108, and 127-132 (FGRMTL).

This sequence belongs to the RNA methyltransferase RlmH family. In terms of assembly, homodimer.

Its subcellular location is the cytoplasm. The enzyme catalyses pseudouridine(1915) in 23S rRNA + S-adenosyl-L-methionine = N(3)-methylpseudouridine(1915) in 23S rRNA + S-adenosyl-L-homocysteine + H(+). Its function is as follows. Specifically methylates the pseudouridine at position 1915 (m3Psi1915) in 23S rRNA. This is Ribosomal RNA large subunit methyltransferase H from Lactococcus lactis subsp. lactis (strain IL1403) (Streptococcus lactis).